Consider the following 166-residue polypeptide: MKVVVIQGPNLNMLGIREQRLYGPMKLEQIHQNMKTFADQNGMEVEFFQSNLEGEIVDKIQECLGDADGIIINPAAYSHTSIAIRDAISAVSLPTLEVHITNIHAREEFRRHSLTAEVAAGVIAGFGPFGYHMAMIAMHQILSELGALKEAQAKAQAQAQEGAKES.

Tyr-22 (proton acceptor) is an active-site residue. 3 residues coordinate substrate: Asn-73, His-79, and Asp-86. The active-site Proton donor is the His-99. Substrate contacts are provided by residues 100–101 and Arg-110; that span reads IT.

It belongs to the type-II 3-dehydroquinase family. As to quaternary structure, homododecamer.

It carries out the reaction 3-dehydroquinate = 3-dehydroshikimate + H2O. The protein operates within metabolic intermediate biosynthesis; chorismate biosynthesis; chorismate from D-erythrose 4-phosphate and phosphoenolpyruvate: step 3/7. Its function is as follows. Catalyzes a trans-dehydration via an enolate intermediate. The sequence is that of 3-dehydroquinate dehydratase from Wolinella succinogenes (strain ATCC 29543 / DSM 1740 / CCUG 13145 / JCM 31913 / LMG 7466 / NCTC 11488 / FDC 602W) (Vibrio succinogenes).